The sequence spans 345 residues: Phenylalanine--tRNA ligase alpha subunit (345 aa).

Glutamate 253 serves as a coordination point for Mg(2+).

It belongs to the class-II aminoacyl-tRNA synthetase family. Phe-tRNA synthetase alpha subunit type 1 subfamily. As to quaternary structure, tetramer of two alpha and two beta subunits. Mg(2+) serves as cofactor.

It is found in the cytoplasm. The catalysed reaction is tRNA(Phe) + L-phenylalanine + ATP = L-phenylalanyl-tRNA(Phe) + AMP + diphosphate + H(+). This chain is Phenylalanine--tRNA ligase alpha subunit, found in Lawsonia intracellularis (strain PHE/MN1-00).